Consider the following 288-residue polypeptide: Ankyrin repeat and SOCS box protein 8 (288 aa).

A Phosphoserine modification is found at S17. 4 ANK repeats span residues 52 to 81 (GTLK…EVNA), 85 to 113 (YNRT…NPNA), 117 to 146 (NRDT…SVNA), and 150 to 179 (NNDT…EVRV). An SOCS box domain is found at 235–288 (QLCEKLTVLCSAPGTLKTLARYTVRRSLGLQYLPDAVKGLPLPASLKEYLLLLE).

This sequence belongs to the ankyrin SOCS box (ASB) family. In terms of assembly, interacts with TBK1; this interaction promotes TBK1 proteasomal degradation. In terms of processing, phosphorylated by TBK1.

Its subcellular location is the cytoplasm. It functions in the pathway protein modification; protein ubiquitination. Functionally, may be a substrate-recognition component of a SCF-like ECS (Elongin-Cullin-SOCS-box protein) E3 ubiquitin-protein ligase complex which mediates the ubiquitination and subsequent proteasomal degradation of target proteins. Inhibits IFN-beta production through the IRF3 signaling pathway by targeting TBK1 via 'Lys-48'-linked ubiquitination, leading to its proteasomal degradation. The polypeptide is Ankyrin repeat and SOCS box protein 8 (ASB8) (Pongo abelii (Sumatran orangutan)).